The chain runs to 354 residues: S-adenosylmethionine:tRNA ribosyltransferase-isomerase (354 aa).

This sequence belongs to the QueA family. As to quaternary structure, monomer.

Its subcellular location is the cytoplasm. The catalysed reaction is 7-aminomethyl-7-carbaguanosine(34) in tRNA + S-adenosyl-L-methionine = epoxyqueuosine(34) in tRNA + adenine + L-methionine + 2 H(+). The protein operates within tRNA modification; tRNA-queuosine biosynthesis. Its function is as follows. Transfers and isomerizes the ribose moiety from AdoMet to the 7-aminomethyl group of 7-deazaguanine (preQ1-tRNA) to give epoxyqueuosine (oQ-tRNA). The polypeptide is S-adenosylmethionine:tRNA ribosyltransferase-isomerase (Salmonella dublin (strain CT_02021853)).